Consider the following 482-residue polypeptide: Probable cytosol aminopeptidase (482 aa).

Lysine 251 and aspartate 256 together coordinate Mn(2+). Residue lysine 263 is part of the active site. Residues aspartate 274, aspartate 333, and glutamate 335 each coordinate Mn(2+). Arginine 337 is a catalytic residue.

This sequence belongs to the peptidase M17 family. The cofactor is Mn(2+).

The protein localises to the cytoplasm. The catalysed reaction is Release of an N-terminal amino acid, Xaa-|-Yaa-, in which Xaa is preferably Leu, but may be other amino acids including Pro although not Arg or Lys, and Yaa may be Pro. Amino acid amides and methyl esters are also readily hydrolyzed, but rates on arylamides are exceedingly low.. The enzyme catalyses Release of an N-terminal amino acid, preferentially leucine, but not glutamic or aspartic acids.. Functionally, presumably involved in the processing and regular turnover of intracellular proteins. Catalyzes the removal of unsubstituted N-terminal amino acids from various peptides. This Acinetobacter baumannii (strain SDF) protein is Probable cytosol aminopeptidase.